Consider the following 7180-residue polypeptide: Replicase polyprotein 1ab (7180 aa).

The region spanning 54-196 (LVNHVRVDCS…PWSILLRKGG (143 aa)) is the CoV Nsp1 globular domain. The region spanning 217–247 (FNVEDACEEVHLNPRGKYSCKAYALLRGYRG) is the BetaCoV Nsp1 C-terminal domain. The 263-residue stretch at 251–513 (ILFVDQYGCD…AICRFLYMDY (263 aa)) folds into the CoV Nsp2 N-terminal domain. Zn(2+) contacts are provided by Cys-390, Cys-395, Cys-411, and Cys-414. The segment at 390-414 (CCGDTCGFRGWVPGNMMDGFPCPGC) is C4. The CoV Nsp2 middle domain maps to 518-706 (CGNLEQRAIL…VDKFKTFFKV (189 aa)). In terms of domain architecture, CoV Nsp2 C-terminal spans 726 to 832 (SNRVCLAGSK…LDQCWRFPCA (107 aa)). Residues 834 to 946 (KKVVFNDKPK…MYCSFSAPDE (113 aa)) form the Ubiquitin-like 1 domain. Residues 1083-1320 (AFDAIYSETL…IAQLYGSCIT (238 aa)) enclose the Peptidase C16 1 domain. Residue Cys-1120 is the For PL1-PRO activity of the active site. Zn(2+)-binding residues include Cys-1197, Cys-1200, Cys-1223, and Cys-1225. The segment at 1197–1225 (CLKCGMELKLQGLDAVFFYGDVVSHMCKC) adopts a C4-type 1 zinc-finger fold. Active-site for PL1-PRO activity residues include His-1271 and Asp-1282. Residues 1321-1481 (PNVCFVKGDV…VIEKCQVTSV (161 aa)) form the Macro domain. Residues 1536–1608 (DDARVFVQAN…VSQIRALLAN (73 aa)) enclose the DPUP domain. The 56-residue stretch at 1607 to 1662 (ANKVDVLCTVDGVNFRSCCVAEGEVFGKTLGSVFCDGINVTKVRCSAIHKGKVFFQ) folds into the Ubiquitin-like 2 domain. Positions 1677–1936 (AFGFDEPQLL…CVAYKPDLSQ (260 aa)) constitute a Peptidase C16 2 domain. Cys-1715 serves as the catalytic For PL2-PRO activity. 4 residues coordinate Zn(2+): Cys-1793, Cys-1795, Cys-1827, and Cys-1829. The segment at 1793 to 1829 (CKCGVKQEQRKGVDAVMHFGTLDKSGLVKGYNIACTC) adopts a C4-type 2 zinc-finger fold. Active-site for PL2-PRO activity residues include His-1872 and Asp-1886. Positions 1950 to 2051 (IKAQFRTFEK…TYFNRPSVVC (102 aa)) constitute a Nucleic acid-binding domain. The region spanning 2106–2259 (SVEDQIVMEA…TDNKVIYTTE (154 aa)) is the G2M domain. 3 helical membrane-spanning segments follow: residues 2228-2248 (AIAC…WIKF), 2289-2309 (FFLV…NVIL), and 2320-2340 (LPMF…VLTI). The tract at residues 2228–2465 (AIACYGAVKW…FTLLRFYIVV (238 aa)) is HD1. The 62-residue stretch at 2325-2386 (GQIVAWVKTT…SINVVQHVVD (62 aa)) folds into the 3Ecto domain. Intrachain disulfides connect Cys-2341-Cys-2365 and Cys-2356-Cys-2362. Helical transmembrane passes span 2403-2423 (LVIG…LVGM) and 2445-2465 (LFVF…YIVV). The tract at residues 2473 to 2563 (CLCRHVMYGC…ELKRPVNPTD (91 aa)) is Y1. Positions 2473–2840 (CLCRHVMYGC…LTTPFSLKGG (368 aa)) constitute a CoV Nsp3 Y domain. Zn(2+) contacts are provided by His-2477, Cys-2482, Cys-2487, Cys-2490, Cys-2523, His-2526, Cys-2530, and Cys-2533. Residues 2477-2490 (HVMYGCSKPGCLFC) form a ZF1 region. A ZF2 region spans residues 2523-2533 (CTKHQWNCLNC). The Y2 stretch occupies residues 2564 to 2656 (SAYYSVIEVK…MVEKKLITTA (93 aa)). Positions 2564–2840 (SAYYSVIEVK…LTTPFSLKGG (277 aa)) are coV-Y. Residues 2657 to 2739 (NTGLSVSRTM…KSVMAAVNAG (83 aa)) form a Y3 region. The interval 2740-2840 (VEVTDESCNN…LTTPFSLKGG (101 aa)) is Y4. A run of 6 helical transmembrane segments spans residues 2846 to 2866 (VLQW…ALMP), 3099 to 3119 (AFDL…FFAL), 3121 to 3141 (ASSV…YYLI), 3153 to 3173 (VVVI…VFQV), 3180 to 3200 (LYAC…SVVM), and 3205 to 3225 (LVMY…AVVV). The segment at 2846–3225 (VLQWLFVANL…FCITYVAVVV (380 aa)) is HD2. Positions 3239–3336 (IGTDVRSDGT…TASVTTSFLQ (98 aa)) constitute a Nsp4C domain. Positions 3337-3639 (SGIVKMVSPT…YQQLAGVKLQ (303 aa)) constitute a Peptidase C30 domain. Active-site for 3CL-PRO activity residues include His-3377 and Cys-3481. Helical transmembrane passes span 3648–3668 (GTCC…SAFV), 3678–3698 (THML…MLLI), 3705–3725 (LTMY…LVVG), 3748–3768 (TYMD…FVTM), 3775–3795 (VFST…WYFG), 3802–3822 (VLLF…LSLA), and 3846–3866 (LVLL…GVLS). Positions 3648-3866 (GTCCWILAST…VCCCYWGVLS (219 aa)) are HD3. In terms of domain architecture, RdRp Nsp7 cofactor spans 3928–4016 (SRLTDVKCAN…DYVRDNTVLQ (89 aa)). In terms of domain architecture, RdRp Nsp8 cofactor spans 4017–4213 (ALQSEFVNMA…HNEVSTVVLQ (197 aa)). A Nsp9 ssRNA-binding domain is found at 4214 to 4323 (NNELMPQKLR…GTLSSTVRLQ (110 aa)). Residues 4324–4461 (AGTATEYASN…CVGTGSQFQS (138 aa)) form the ExoN/MTase coactivator domain. Zn(2+) contacts are provided by Cys-4397, Cys-4400, His-4406, Cys-4413, Cys-4439, Cys-4442, Cys-4450, and Cys-4452. 2 zinc fingers span residues 4397 to 4413 (CIYC…DGLC) and 4439 to 4452 (CQVC…SCSC). A NiRAN domain is found at 4466–4721 (FLNRVRGTSV…DSELFVNGTY (256 aa)). Positions 4669 and 4678 each coordinate Mn(2+). The region spanning 4722–4820 (REFDLVQYDF…MNMDVDTHRY (99 aa)) is the Nsp12 Interface domain. 5 residues coordinate Zn(2+): His-4751, Cys-4757, Cys-4762, Cys-4766, and Cys-4943. A Nsp12 RNA-dependent RNA polymerase domain is found at 4821-5388 (RLSLKDLLLY…NMYLRSAVMQ (568 aa)). The segment at 4823-5037 (SLKDLLLYAA…HQKCLKSIAA (215 aa)) is rdRp Fingers N-ter. The interval 5038–5076 (TRGVPVVIGTTKFYGGWDDMLRRLIKDVDSPVLMGWDYP) is rdRp Palm N-ter. The 163-residue stretch at 5068–5230 (PVLMGWDYPK…CYNSEFASKG (163 aa)) folds into the RdRp catalytic domain. The rdRp Fingers C-ter stretch occupies residues 5077–5135 (KCDRAMPNILRIVSSLVLARKHDSCCSHTDRFYRLANECAQVLGEIVMCGGCYYVKPGG). Positions 5098, 5101, and 5102 each coordinate Zn(2+). The segment at 5136–5271 (TSSGDATTAF…EKGPHEFCSQ (136 aa)) is rdRp Palm C-ter. Active-site residues include Ser-5215, Asp-5216, and Asp-5217. The tract at residues 5272-5388 (HTMLVKMDGD…NMYLRSAVMQ (117 aa)) is rdRp Thumb. The CV ZBD domain occupies 5389-5501 (SVGACVVCSS…EDFNKIASCK (113 aa)). The Zn(2+) site is built by Cys-5393, Cys-5396, Cys-5404, Cys-5407, Cys-5414, Cys-5417, His-5421, His-5427, Cys-5438, Cys-5443, Cys-5460, and His-5463. One can recognise a (+)RNA virus helicase ATP-binding domain in the interval 5644–5825 (SVPETFQNNV…MCCLGPDIFL (182 aa)). An ATP-binding site is contributed by 5669–5676 (GPPGTGKS). In terms of domain architecture, (+)RNA virus helicase C-terminal spans 5826–6003 (GTCYRCPKEI…FKDCSKSYVG (178 aa)). The 216-residue stretch at 6057 to 6272 (LFITRDEAIK…RCLAVHDCFC (216 aa)) folds into the ExoN domain. Active-site residues include Asp-6075, Glu-6077, and Glu-6176. Zn(2+) is bound by residues Cys-6192, Cys-6195, Cys-6211, His-6214, His-6242, Cys-6246, and His-6249. Active-site residues include His-6253 and Asp-6258. A Zn(2+)-binding site is contributed by Cys-6264. The N7-MTase domain maps to 6281-6507 (YPIISNEVSV…NLWNTFTRLQ (227 aa)). 6316–6322 (DIGNPKG) lines the S-adenosyl-L-methionine pocket. The interval 6394–6408 (CNGGSLYVNKHAFHT) is gpppA-binding. Residues Cys-6432, Cys-6453, Cys-6464, and His-6467 each coordinate Zn(2+). The Nsp15 N-terminal oligomerization domain maps to 6508–6568 (SLENVVYNLV…NVAVELFAER (61 aa)). Residues 6569–6689 (SIRPHPELKL…FAMRRDGDDV (121 aa)) enclose the AV-Nsp11N/CoV-Nsp15M domain. The 140-residue stretch at 6739–6878 (SPRSEMEKDF…NEEKVMTFYP (140 aa)) folds into the NendoU domain. The region spanning 6883-7177 (AADWKPGYVM…KEVFVGDSLV (295 aa)) is the Nidovirus-type SAM-dependent 2'-O-MTase domain. Residues Lys-6927, Asp-7011, Lys-7051, and Glu-7084 contribute to the active site.

The protein belongs to the coronaviruses polyprotein 1ab family. As to quaternary structure, interacts with host PHB and PHB2. In terms of assembly, interacts with papain-like protease nsp3 and non-structural protein 6. Monomer. Homodimer. Only the homodimer shows catalytic activity. As to quaternary structure, interacts with nsp8 and nsp12 to form the replication-transcription complex (RTC): nsp12, nsp7, two subunits of nsp8, and up to two subunits of nsp13. In terms of assembly, interacts with nsp7, nsp13 and nsp12 to form the replication-transcription complex (RTC): nsp12, nsp7, two subunits of nsp8, and up to two subunits of nsp13. Interacts with nsp12. As to quaternary structure, interacts with proofreading exoribonuclease nsp14 and 2'-O-methyltransferase nsp16; these interactions enhance nsp14 and nsp16 enzymatic activities. In terms of assembly, interacts with nsp7 and nsp8 to form the replication-transcription complex (RTC): nsp12, nsp7, two subunits of nsp8, and up to two subunits of nsp13. Interacts with nsp9. Interacts with nsp8 to form the replication-transcription complex (RTC): nsp12, nsp7, two subunits of nsp8, and up to two subunits of nsp13. Requires Mn(2+) as cofactor. It depends on Mg(2+) as a cofactor. In terms of processing, specific enzymatic cleavages in vivo by its own proteases yield mature proteins. 3CL-PRO and PL-PRO proteinases are autocatalytically processed.

The protein localises to the host membrane. It is found in the host cytoplasm. It localises to the host perinuclear region. The protein resides in the host endoplasmic reticulum-Golgi intermediate compartment. It catalyses the reaction RNA(n) + a ribonucleoside 5'-triphosphate = RNA(n+1) + diphosphate. It carries out the reaction ATP + H2O = ADP + phosphate + H(+). The catalysed reaction is Thiol-dependent hydrolysis of ester, thioester, amide, peptide and isopeptide bonds formed by the C-terminal Gly of ubiquitin (a 76-residue protein attached to proteins as an intracellular targeting signal).. The enzyme catalyses a 5'-end (N(7)-methyl 5'-triphosphoguanosine)-ribonucleoside in mRNA + S-adenosyl-L-methionine = a 5'-end (N(7)-methyl 5'-triphosphoguanosine)-(2'-O-methyl-ribonucleoside) in mRNA + S-adenosyl-L-homocysteine + H(+). It catalyses the reaction uridylyl-uridylyl-ribonucleotide-RNA = a 3'-end uridylyl-2',3'-cyclophospho-uridine-RNA + a 5'-end dephospho-ribonucleoside-RNA. It carries out the reaction a 5'-end diphospho-ribonucleoside in mRNA + GTP + H(+) = a 5'-end (5'-triphosphoguanosine)-ribonucleoside in mRNA + diphosphate. The catalysed reaction is a 5'-end (5'-triphosphoguanosine)-ribonucleoside in mRNA + S-adenosyl-L-methionine = a 5'-end (N(7)-methyl 5'-triphosphoguanosine)-ribonucleoside in mRNA + S-adenosyl-L-homocysteine. The replicase polyprotein of coronaviruses is a multifunctional protein: it contains the activities necessary for the transcription of negative stranded RNA, leader RNA, subgenomic mRNAs and progeny virion RNA as well as proteinases responsible for the cleavage of the polyprotein into functional products. In terms of biological role, inhibits host translation by interacting with the 40S ribosomal subunit. The nsp1-40S ribosome complex further induces an endonucleolytic cleavage near the 5'UTR of host mRNAs, targeting them for degradation. Viral mRNAs are not susceptible to nsp1-mediated endonucleolytic RNA cleavage thanks to the presence of a 5'-end leader sequence and are therefore protected from degradation. By suppressing host gene expression, nsp1 facilitates efficient viral gene expression in infected cells and evasion from host immune response. Its function is as follows. May play a role in the modulation of host cell survival signaling pathway by interacting with host PHB and PHB2. Indeed, these two proteins play a role in maintaining the functional integrity of the mitochondria and protecting cells from various stresses. Functionally, responsible for the cleavages located at the N-terminus of the replicase polyprotein. In addition, PL-PRO possesses a deubiquitinating/deISGylating activity and processes both 'Lys-48'- and 'Lys-63'-linked polyubiquitin chains from cellular substrates. Participates together with nsp4 in the assembly of virally-induced cytoplasmic double-membrane vesicles necessary for viral replication. Antagonizes innate immune induction of type I interferon by blocking the phosphorylation, dimerization and subsequent nuclear translocation of host IRF3. Also prevents host NF-kappa-B signaling. Participates in the assembly of virally-induced cytoplasmic double-membrane vesicles necessary for viral replication. In terms of biological role, cleaves the C-terminus of replicase polyprotein at 11 sites. Recognizes substrates containing the core sequence [ILMVF]-Q-|-[SGACN]. Also able to bind an ADP-ribose-1''-phosphate (ADRP). Its function is as follows. Plays a role in the initial induction of autophagosomes from host endoplasmic reticulum. Later, limits the expansion of these phagosomes that are no longer able to deliver viral components to lysosomes. Functionally, forms a hexadecamer with nsp8 (8 subunits of each) that may participate in viral replication by acting as a primase. Alternatively, may synthesize substantially longer products than oligonucleotide primers. Forms a hexadecamer with nsp7 (8 subunits of each) that may participate in viral replication by acting as a primase. Alternatively, may synthesize substantially longer products than oligonucleotide primers. In terms of biological role, forms a primer, NSP9-pU, which is utilized by the polymerase for the initiation of RNA chains. Interacts with ribosome signal recognition particle RNA (SRP). Together with NSP8, suppress protein integration into the cell membrane, thereby disrupting host immune defenses. Its function is as follows. Plays a pivotal role in viral transcription by stimulating both nsp14 3'-5' exoribonuclease and nsp16 2'-O-methyltransferase activities. Therefore plays an essential role in viral mRNAs cap methylation. Functionally, RNA-directed RNA polymerase that catalyzes the transcription of viral genomic and subgenomic RNAs. Acts in complex with nsp7 and nsp8 to transcribe both the minus and positive strands of genomic RNA. The kinase-like NiRAN domain of NSP12 attaches one or more nucleotides to the amino terminus of NSP9, forming a covalent RNA-protein intermediate that serves as transcription/replication primer. Subgenomic RNAs (sgRNAs) are formed by discontinuous transcription: The polymerase has the ability to pause at transcription-regulating sequences (TRS) and jump to the leader TRS, resulting in a major deletion. This creates a series of subgenomic RNAs that are replicated, transcribed and translated. In addition, Nsp12 is a subunit of the viral RNA capping enzyme that catalyzes the RNA guanylyltransferase reaction for genomic and sub-genomic RNAs. Subsequently, the NiRAN domain transfers RNA to GDP, and forms the core cap structure GpppA-RNA. Multi-functional protein with a zinc-binding domain in N-terminus displaying RNA and DNA duplex-unwinding activities with 5' to 3' polarity. Activity of helicase is dependent on magnesium. In terms of biological role, plays a role in viral RNA synthesis through two distinct activities. The N7-guanine methyltransferase activity plays a role in the formation of the cap structure GpppA-RNA. The proofreading exoribonuclease reduces the sensitivity of the virus to RNA mutagens during replication. This activity acts on both ssRNA and dsRNA in a 3'-5' direction. Its function is as follows. Plays a role in viral transcription/replication and prevents the simultaneous activation of host cell dsRNA sensors, such as MDA5/IFIH1, OAS, and PKR. Acts by degrading the 5'-polyuridines generated during replication of the poly(A) region of viral genomic and subgenomic RNAs. Catalyzes a two-step reaction in which a 2'3'-cyclic phosphate (2'3'-cP) is first generated by 2'-O transesterification, which is then hydrolyzed to a 3'-phosphate (3'-P). If not degraded, poly(U) RNA would hybridize with poly(A) RNA tails and activate host dsRNA sensors. Functionally, 2'-O-methyltransferase: Methyltransferase that mediates mRNA cap 2'-O-ribose methylation to the 5'-cap structure of viral mRNAs. N7-methyl guanosine cap is a prerequisite for binding of nsp16. Therefore plays an essential role in viral mRNAs cap methylation which is essential to evade immune system. The sequence is that of Replicase polyprotein 1ab (rep) from Mus musculus (Mouse).